We begin with the raw amino-acid sequence, 362 residues long: Ribosome-binding ATPase YchF (362 aa).

Residues 3–255 form the OBG-type G domain; that stretch reads FKCGIIGLPN…MSDEEKKSFM (253 aa). 12–17 is an ATP binding site; the sequence is NVGKST. The Mg(2+) site is built by serine 16 and threonine 36. One can recognise a TGS domain in the interval 277–360; the sequence is NLITFFTVGD…QDGDIIHFLF (84 aa).

Belongs to the TRAFAC class OBG-HflX-like GTPase superfamily. OBG GTPase family. YchF/OLA1 subfamily. Requires Mg(2+) as cofactor.

ATPase that binds to both the 70S ribosome and the 50S ribosomal subunit in a nucleotide-independent manner. The sequence is that of Ribosome-binding ATPase YchF from Buchnera aphidicola subsp. Acyrthosiphon pisum (strain APS) (Acyrthosiphon pisum symbiotic bacterium).